The primary structure comprises 396 residues: Elongation factor Tu (396 aa).

The region spanning lysine 10 to valine 205 is the tr-type G domain. A G1 region spans residues glycine 19 to threonine 26. Residue glycine 19 to threonine 26 participates in GTP binding. Threonine 26 provides a ligand contact to Mg(2+). Positions glycine 62–asparagine 66 are G2. Residues aspartate 83–glycine 86 form a G3 region. Residues aspartate 83–histidine 87 and asparagine 138–aspartate 141 contribute to the GTP site. The segment at asparagine 138–aspartate 141 is G4. The segment at serine 175–leucine 177 is G5.

It belongs to the TRAFAC class translation factor GTPase superfamily. Classic translation factor GTPase family. EF-Tu/EF-1A subfamily. In terms of assembly, monomer.

It localises to the cytoplasm. The catalysed reaction is GTP + H2O = GDP + phosphate + H(+). GTP hydrolase that promotes the GTP-dependent binding of aminoacyl-tRNA to the A-site of ribosomes during protein biosynthesis. In Rhodococcus erythropolis (strain PR4 / NBRC 100887), this protein is Elongation factor Tu.